The sequence spans 216 residues: Somatotropin (216 aa).

A signal peptide spans 1–26; the sequence is MAAGPRNSMLLVFALLSLPWPQEVGA. A Zn(2+)-binding site is contributed by His45. Cys78 and Cys189 are joined by a disulfide. Position 131 is a phosphoserine (Ser131). Zn(2+) is bound at residue Glu198. Residues Cys206 and Cys214 are joined by a disulfide bond.

The protein belongs to the somatotropin/prolactin family.

The protein localises to the secreted. In terms of biological role, plays an important role in growth control. Its major role in stimulating body growth is to stimulate the liver and other tissues to secrete IGF1. It stimulates both the differentiation and proliferation of myoblasts. It also stimulates amino acid uptake and protein synthesis in muscle and other tissues. This is Somatotropin (GH1) from Neovison vison (American mink).